The sequence spans 93 residues: Cytochrome c oxidase polypeptide 6, mitochondrial (93 aa).

Topologically, residues 2-33 (STGNESYNLRYPKGFKGYPYNMYKLEGYGTPK) are mitochondrial matrix. Residues 34 to 53 (GYITLIGVVATLTVSGLFFA) form a helical membrane-spanning segment. Residues 54-93 (KTRSNKREYPTHNKEWRAKTLAYAKETNADPIYQLPKDKI) lie on the Mitochondrial intermembrane side of the membrane.

It belongs to the cytochrome c oxidase IV family. As to quaternary structure, component of the cytochrome c oxidase (complex IV, CIV), a multisubunit enzyme composed of a catalytic core of 3 subunits and seevral supernumerary subunits. The complex exists as a monomer or a dimer and forms supercomplexes (SCs) in the inner mitochondrial membrane with ubiquinol-cytochrome c oxidoreductase (cytochrome b-c1 complex, complex III, CIII).

It is found in the mitochondrion inner membrane. Its pathway is energy metabolism; oxidative phosphorylation. In terms of biological role, component of the cytochrome c oxidase, the last enzyme in the mitochondrial electron transport chain which drives oxidative phosphorylation. The respiratory chain contains 3 multisubunit complexes succinate dehydrogenase (complex II, CII), ubiquinol-cytochrome c oxidoreductase (cytochrome b-c1 complex, complex III, CIII) and cytochrome c oxidase (complex IV, CIV), that cooperate to transfer electrons derived from NADH and succinate to molecular oxygen, creating an electrochemical gradient over the inner membrane that drives transmembrane transport and the ATP synthase. Cytochrome c oxidase is the component of the respiratory chain that catalyzes the reduction of oxygen to water. Electrons originating from reduced cytochrome c in the intermembrane space (IMS) are transferred via the dinuclear copper A center (CU(A)) of subunit 2 and heme A of subunit 1 to the active site in subunit 1, a binuclear center (BNC) formed by heme A3 and copper B (CU(B)). The BNC reduces molecular oxygen to 2 water molecules using 4 electrons from cytochrome c in the IMS and 4 protons from the mitochondrial matrix. This chain is Cytochrome c oxidase polypeptide 6, mitochondrial (cxfA), found in Dictyostelium discoideum (Social amoeba).